The primary structure comprises 711 residues: Polyribonucleotide nucleotidyltransferase (711 aa).

Mg(2+) is bound by residues D494 and D500. In terms of domain architecture, KH spans P560–I620. Positions G651–C710 constitute an S1 motif domain.

This sequence belongs to the polyribonucleotide nucleotidyltransferase family. Mg(2+) serves as cofactor.

It localises to the cytoplasm. It carries out the reaction RNA(n+1) + phosphate = RNA(n) + a ribonucleoside 5'-diphosphate. Involved in mRNA degradation. Catalyzes the phosphorolysis of single-stranded polyribonucleotides processively in the 3'- to 5'-direction. The protein is Polyribonucleotide nucleotidyltransferase of Campylobacter hominis (strain ATCC BAA-381 / DSM 21671 / CCUG 45161 / LMG 19568 / NCTC 13146 / CH001A).